Consider the following 726-residue polypeptide: Prolyl endopeptidase-like (726 aa).

Ser-138 bears the Phosphoserine mark. Catalysis depends on charge relay system residues Ser-558, Asp-644, and His-689.

This sequence belongs to the peptidase S9A family. As to quaternary structure, homodimer. Interacts with the AP-1 complex.

Its subcellular location is the cytoplasm. It is found in the cytosol. It localises to the golgi apparatus. The protein resides in the trans-Golgi network. The protein localises to the cytoskeleton. Its subcellular location is the nucleus. Functionally, serine peptidase whose precise substrate specificity remains unclear. Does not cleave peptides after a arginine or lysine residue. Regulates trans-Golgi network morphology and sorting by regulating the membrane binding of the AP-1 complex. May play a role in the regulation of synaptic vesicle exocytosis. In Rattus norvegicus (Rat), this protein is Prolyl endopeptidase-like (Prepl).